The sequence spans 190 residues: Shikimate kinase (190 aa).

14–19 contacts ATP; the sequence is GSGKST. Ser18 contacts Mg(2+). Positions 36, 60, and 82 each coordinate substrate. Arg120 contacts ATP. Residue Arg147 participates in substrate binding.

The protein belongs to the shikimate kinase family. As to quaternary structure, monomer. Mg(2+) serves as cofactor.

It localises to the cytoplasm. The enzyme catalyses shikimate + ATP = 3-phosphoshikimate + ADP + H(+). Its pathway is metabolic intermediate biosynthesis; chorismate biosynthesis; chorismate from D-erythrose 4-phosphate and phosphoenolpyruvate: step 5/7. Its function is as follows. Catalyzes the specific phosphorylation of the 3-hydroxyl group of shikimic acid using ATP as a cosubstrate. The protein is Shikimate kinase of Chlorobium phaeobacteroides (strain DSM 266 / SMG 266 / 2430).